A 1070-amino-acid chain; its full sequence is DNA-directed RNA polymerase subunit beta (1070 aa).

It belongs to the RNA polymerase beta chain family. As to quaternary structure, in plastids the minimal PEP RNA polymerase catalytic core is composed of four subunits: alpha, beta, beta', and beta''. When a (nuclear-encoded) sigma factor is associated with the core the holoenzyme is formed, which can initiate transcription.

The protein localises to the plastid. It localises to the chloroplast. It carries out the reaction RNA(n) + a ribonucleoside 5'-triphosphate = RNA(n+1) + diphosphate. Its function is as follows. DNA-dependent RNA polymerase catalyzes the transcription of DNA into RNA using the four ribonucleoside triphosphates as substrates. The chain is DNA-directed RNA polymerase subunit beta from Piper cenocladum (Ant piper).